A 201-amino-acid polypeptide reads, in one-letter code: MSRYRGPRFKKIRRLGALPGLTNKRPRAGSDLRNQSRSGKKSQYRIRLEEKQKLRFHYGLTERQLLKYVRIAGKAKGSTGQVLLQLLEMRLDNILFRLGMATTIPGARQLVNHRHILVNGRIVDIPSYRCKPRDIITARDEQNSRALIQNSFNSPSQDEMPKHLTLQPFQYKGLVNQIIDSKWVGLKINELLVVEYYSRQT.

The interval 15 to 44 (LGALPGLTNKRPRAGSDLRNQSRSGKKSQY) is disordered. One can recognise an S4 RNA-binding domain in the interval 89-149 (MRLDNILFRL…DEQNSRALIQ (61 aa)).

The protein belongs to the universal ribosomal protein uS4 family. In terms of assembly, part of the 30S ribosomal subunit. Contacts protein S5. The interaction surface between S4 and S5 is involved in control of translational fidelity.

It is found in the plastid. The protein resides in the chloroplast. One of the primary rRNA binding proteins, it binds directly to 16S rRNA where it nucleates assembly of the body of the 30S subunit. Its function is as follows. With S5 and S12 plays an important role in translational accuracy. The chain is Small ribosomal subunit protein uS4c (rps4) from Daucus carota (Wild carrot).